Here is a 165-residue protein sequence, read N- to C-terminus: Large ribosomal subunit protein uL10 (165 aa).

It belongs to the universal ribosomal protein uL10 family. In terms of assembly, part of the ribosomal stalk of the 50S ribosomal subunit. The N-terminus interacts with L11 and the large rRNA to form the base of the stalk. The C-terminus forms an elongated spine to which L12 dimers bind in a sequential fashion forming a multimeric L10(L12)X complex.

Its function is as follows. Forms part of the ribosomal stalk, playing a central role in the interaction of the ribosome with GTP-bound translation factors. In Cronobacter sakazakii (strain ATCC BAA-894) (Enterobacter sakazakii), this protein is Large ribosomal subunit protein uL10.